We begin with the raw amino-acid sequence, 488 residues long: 3-octaprenyl-4-hydroxybenzoate carboxy-lyase (488 aa).

Position 172 (Asn-172) interacts with Mn(2+). Residues 175–177, 189–191, and 194–195 each bind prenylated FMN; these read IYR, RWL, and RG. Glu-238 contacts Mn(2+). The Proton donor role is filled by Asp-287.

Belongs to the UbiD family. Homohexamer. Requires prenylated FMN as cofactor. Mn(2+) serves as cofactor.

The protein resides in the cell membrane. The catalysed reaction is a 4-hydroxy-3-(all-trans-polyprenyl)benzoate + H(+) = a 2-(all-trans-polyprenyl)phenol + CO2. The protein operates within cofactor biosynthesis; ubiquinone biosynthesis. In terms of biological role, catalyzes the decarboxylation of 3-octaprenyl-4-hydroxy benzoate to 2-octaprenylphenol, an intermediate step in ubiquinone biosynthesis. The protein is 3-octaprenyl-4-hydroxybenzoate carboxy-lyase of Hahella chejuensis (strain KCTC 2396).